Consider the following 77-residue polypeptide: MENFDKVKDIIVDRLGVDADKVTEDASFKDDLGADSLDIAELVMELEDEFGTEIPDEEAEKINTVGDAVKYINSLEK.

Residues 1–76 (MENFDKVKDI…DAVKYINSLE (76 aa)) enclose the Carrier domain. Serine 36 carries the O-(pantetheine 4'-phosphoryl)serine modification.

The protein belongs to the acyl carrier protein (ACP) family. In terms of processing, 4'-phosphopantetheine is transferred from CoA to a specific serine of apo-ACP by AcpS. This modification is essential for activity because fatty acids are bound in thioester linkage to the sulfhydryl of the prosthetic group.

The protein localises to the cytoplasm. Its pathway is lipid metabolism; fatty acid biosynthesis. Functionally, carrier of the growing fatty acid chain in fatty acid biosynthesis. This Staphylococcus epidermidis (strain ATCC 12228 / FDA PCI 1200) protein is Acyl carrier protein.